The chain runs to 616 residues: Chaperone protein HscA (616 aa).

Belongs to the heat shock protein 70 family.

Its function is as follows. Chaperone involved in the maturation of iron-sulfur cluster-containing proteins. Has a low intrinsic ATPase activity which is markedly stimulated by HscB. Involved in the maturation of IscU. The sequence is that of Chaperone protein HscA from Salmonella paratyphi C (strain RKS4594).